The chain runs to 609 residues: Elongation factor 4 (609 aa).

A tr-type G domain is found at 11 to 193 (SRIRNFSIIA…QIVEKVPAPS (183 aa)). GTP-binding positions include 23–28 (DHGKST) and 140–143 (NKID).

It belongs to the TRAFAC class translation factor GTPase superfamily. Classic translation factor GTPase family. LepA subfamily.

The protein resides in the cell membrane. The catalysed reaction is GTP + H2O = GDP + phosphate + H(+). Required for accurate and efficient protein synthesis under certain stress conditions. May act as a fidelity factor of the translation reaction, by catalyzing a one-codon backward translocation of tRNAs on improperly translocated ribosomes. Back-translocation proceeds from a post-translocation (POST) complex to a pre-translocation (PRE) complex, thus giving elongation factor G a second chance to translocate the tRNAs correctly. Binds to ribosomes in a GTP-dependent manner. This chain is Elongation factor 4, found in Halalkalibacterium halodurans (strain ATCC BAA-125 / DSM 18197 / FERM 7344 / JCM 9153 / C-125) (Bacillus halodurans).